Reading from the N-terminus, the 423-residue chain is AP-1 complex subunit mu-1 (423 aa).

S2 is subject to N-acetylserine. T152, T154, and T223 each carry phosphothreonine. The MHD domain maps to 168–421 (KNEVFLDVIE…ITQNGDYQLR (254 aa)).

Belongs to the adaptor complexes medium subunit family. Adaptor protein complex 1 (AP-1) is a heterotetramer composed of two large adaptins (gamma-type subunit AP1G1 and beta-type subunit AP1B1), a medium adaptin (mu-type subunit AP1M1 or AP1M2) and a small adaptin (sigma-type subunit AP1S1 or AP1S2 or AP1S3). Interacts with MARCHF11. In terms of processing, phosphorylation of membrane-bound AP1M1/AP1M2 increases its affinity for sorting signals.

The protein localises to the golgi apparatus. It localises to the cytoplasmic vesicle. The protein resides in the clathrin-coated vesicle membrane. Subunit of clathrin-associated adaptor protein complex 1 that plays a role in protein sorting in the trans-Golgi network (TGN) and endosomes. The AP complexes mediate the recruitment of clathrin to membranes and the recognition of sorting signals within the cytosolic tails of transmembrane cargo molecules. This Mus musculus (Mouse) protein is AP-1 complex subunit mu-1 (Ap1m1).